Reading from the N-terminus, the 147-residue chain is Large ribosomal subunit protein uL15 (147 aa).

Residues 1 to 58 (MKLFELKPAPGAKKRPKRVGRGESSGHGKTSTRGHKGQWARSGGGVRPGFEGGQMPLT) form a disordered region. The segment covering 42-52 (SGGGVRPGFEG) has biased composition (gly residues).

The protein belongs to the universal ribosomal protein uL15 family. In terms of assembly, part of the 50S ribosomal subunit.

Binds to the 23S rRNA. The protein is Large ribosomal subunit protein uL15 of Caldicellulosiruptor saccharolyticus (strain ATCC 43494 / DSM 8903 / Tp8T 6331).